The following is a 134-amino-acid chain: Small ribosomal subunit protein bS6 (134 aa).

Positions 99–134 are disordered; that stretch reads EPSAMMQKRDRDERKDRERGRRRDDDGYVGERNEEG. Basic and acidic residues predominate over residues 105 to 134; the sequence is QKRDRDERKDRERGRRRDDDGYVGERNEEG.

Belongs to the bacterial ribosomal protein bS6 family.

Functionally, binds together with bS18 to 16S ribosomal RNA. This chain is Small ribosomal subunit protein bS6, found in Methylobacterium sp. (strain 4-46).